The sequence spans 482 residues: Carbamoyl phosphate synthase large chain, N-terminal section (482 aa).

Residues 1-398 (MESIKKVMVF…ALQKAIRSLD (398 aa)) form a carboxyphosphate synthetic domain region. Arg126, Arg166, Gly172, Gly173, Glu205, Val207, Glu212, Gly238, Ile239, His240, Gln281, and Glu295 together coordinate ATP. The region spanning 130-324 (AEAMAEINEP…IARIAAKIAI (195 aa)) is the ATP-grasp domain. Mg(2+) contacts are provided by Gln281, Glu295, and Asn297. Mn(2+)-binding residues include Gln281, Glu295, and Asn297.

Belongs to the CarB family. In terms of assembly, composed of two chains; the small (or glutamine) chain promotes the hydrolysis of glutamine to ammonia, which is used by the large (or ammonia) chain to synthesize carbamoyl phosphate. Tetramer of heterodimers (alpha,beta)4. Mg(2+) serves as cofactor. Requires Mn(2+) as cofactor.

The catalysed reaction is hydrogencarbonate + L-glutamine + 2 ATP + H2O = carbamoyl phosphate + L-glutamate + 2 ADP + phosphate + 2 H(+). The enzyme catalyses hydrogencarbonate + NH4(+) + 2 ATP = carbamoyl phosphate + 2 ADP + phosphate + 2 H(+). It functions in the pathway amino-acid biosynthesis; L-arginine biosynthesis; carbamoyl phosphate from bicarbonate: step 1/1. Its pathway is pyrimidine metabolism; UMP biosynthesis via de novo pathway; (S)-dihydroorotate from bicarbonate: step 1/3. Functionally, large subunit of the glutamine-dependent carbamoyl phosphate synthetase (CPSase). CPSase catalyzes the formation of carbamoyl phosphate from the ammonia moiety of glutamine, carbonate, and phosphate donated by ATP, constituting the first step of 2 biosynthetic pathways, one leading to arginine and/or urea and the other to pyrimidine nucleotides. The large subunit (synthetase) binds the substrates ammonia (free or transferred from glutamine from the small subunit), hydrogencarbonate and ATP and carries out an ATP-coupled ligase reaction, activating hydrogencarbonate by forming carboxy phosphate which reacts with ammonia to form carbamoyl phosphate. This is Carbamoyl phosphate synthase large chain, N-terminal section (carB1) from Methanocaldococcus jannaschii (strain ATCC 43067 / DSM 2661 / JAL-1 / JCM 10045 / NBRC 100440) (Methanococcus jannaschii).